Reading from the N-terminus, the 1445-residue chain is 3'-5' RNA helicase YTHDC2 (1445 aa).

A disordered region spans residues 1-50 (MSRPSSVSPRPPAPSGGGTGGGGGGSGGGGGGGGGGPASCGPGGGGRAKG). The segment covering 15–48 (SGGGTGGGGGGSGGGGGGGGGGPASCGPGGGGRA) has biased composition (gly residues). The R3H domain maps to 53–121 (DIRIDEEVKI…NRYLTVKKKD (69 aa)). In terms of domain architecture, Helicase ATP-binding spans 218 to 384 (VKIIKENKVV…FGSCPVIYIQ (167 aa)). 231–238 (GETGSGKT) contacts ATP. Residues 331–334 (DEVH) carry the DEAH box motif. ANK repeat units lie at residues 521-553 (TSATALMVAAGRGFTSQVEQLISMGANVHSKAS) and 554-586 (NGWMALDWAKHFGQTEIVDLLESYSASLEFGNL). The 173-residue stretch at 627–799 (LLYNICHSCD…ELCLHTKLLA (173 aa)) folds into the Helicase C-terminal domain. Phosphoserine occurs at positions 1104, 1105, and 1107. The span at 1179-1189 (EQSAGLQQPSG) shows a compositional bias: polar residues. Residues 1179 to 1303 (EQSAGLQQPS…SPSPRPNMPI (125 aa)) form a disordered region. Over residues 1246–1264 (KYKDRGILHPKRSTDDRSD) the composition is skewed to basic and acidic residues. Positions 1265 to 1279 (QSSVKSTDSSSYPSP) are enriched in low complexity. Phosphoserine is present on residues Ser1278, Ser1282, and Ser1296. In terms of domain architecture, YTH spans 1303 to 1433 (IRYFIMKSSN…QVGEQLLQLW (131 aa)). Residues 1309–1311 (KSS), Trp1325, and Trp1375 contribute to the RNA site.

The protein belongs to the DEAD box helicase family. DEAH subfamily. In terms of assembly, interacts with MEIOC; binds transcripts that regulate the mitotic cell cycle inhibiting progression into metaphase, thereby allowing meiotic prophase to proceed normally. Interacts (via ANK repeats) with XRN1. Interacts with ZCCHC4. Associates with the small ribosomal subunit. Interacts with RBM46. In terms of tissue distribution, present in male and female germ cells (at protein level). Highly expressed in testis. Not detected in spermatogonia next to the tubule wall but is strongly expressed in spermatocytes, suggesting that it is up-regulated in germ cells upon entry into meiosis (at protein level).

Its subcellular location is the cytoplasm. The protein resides in the perinuclear region. The enzyme catalyses ATP + H2O = ADP + phosphate + H(+). Functionally, 3'-5' RNA helicase that plays a key role in the male and female germline by promoting transition from mitotic to meiotic divisions in stem cells. Specifically recognizes and binds N6-methyladenosine (m6A)-containing RNAs, a modification present at internal sites of mRNAs and some non-coding RNAs that plays a role in the efficiency of RNA processing and stability. Essential for ensuring a successful progression of the meiotic program in the germline by regulating the level of m6A-containing RNAs. Acts by binding and promoting degradation of m6A-containing mRNAs: the 3'-5' RNA helicase activity is required for this process and RNA degradation may be mediated by XRN1 exoribonuclease. Required for both spermatogenesis and oogenesis. The sequence is that of 3'-5' RNA helicase YTHDC2 from Mus musculus (Mouse).